A 376-amino-acid polypeptide reads, in one-letter code: 23S rRNA (uracil(747)-C(5))-methyltransferase RlmC (376 aa).

Residues Cys3, Cys11, Cys14, and Cys87 each coordinate [4Fe-4S] cluster. Gln212, Phe241, Glu262, and Asn307 together coordinate S-adenosyl-L-methionine. The active-site Nucleophile is the Cys334.

This sequence belongs to the class I-like SAM-binding methyltransferase superfamily. RNA M5U methyltransferase family. RlmC subfamily.

The enzyme catalyses uridine(747) in 23S rRNA + S-adenosyl-L-methionine = 5-methyluridine(747) in 23S rRNA + S-adenosyl-L-homocysteine + H(+). Its function is as follows. Catalyzes the formation of 5-methyl-uridine at position 747 (m5U747) in 23S rRNA. In Salmonella newport (strain SL254), this protein is 23S rRNA (uracil(747)-C(5))-methyltransferase RlmC.